The primary structure comprises 1046 residues: Hemoglobin-haptoglobin-binding protein A (1046 aa).

Residues 1–24 (MTNFRLNLLAYSVMLGLTAGVAYA) form the signal peptide. Repeat copies occupy residues 26–29 (QPTN), 30–33 (QPTN), 34–37 (QPTN), and 38–41 (QPTN). Positions 26 to 41 (QPTNQPTNQPTNQPTN) are 4 X 4 AA tandem repeats of Q-P-T-N. The TonB box signature appears at 51–58 (EQINVLGS). The TBDR plug domain occupies 61 to 188 (HNDNTPPKIA…LGGSVSFDTK (128 aa)). One can recognise a TBDR beta-barrel domain in the interval 196 to 1046 (NKNYYASYKR…NYRMSVQFEF (851 aa)). A TonB C-terminal box motif is present at residues 1029–1046 (NRFYAPGRNYRMSVQFEF).

It belongs to the TonB-dependent receptor family. Hemoglobin/haptoglobin binding protein subfamily.

The protein resides in the cell outer membrane. Its function is as follows. Acts as a receptor for the hemoglobin/haptoglobin complex of the human host and is required for heme uptake. Does not bind hemoglobin alone. The protein is Hemoglobin-haptoglobin-binding protein A (hhuA) of Haemophilus influenzae.